Here is a 283-residue protein sequence, read N- to C-terminus: Quinate/shikimate dehydrogenase (NAD(+)) (283 aa).

Shikimate is bound by residues Ser-17, Thr-69, Lys-73, Asn-94, and Asp-110. L-quinate contacts are provided by residues Ser-17–Thr-19, Thr-69, Lys-73, Asn-94, and Asp-110. Lys-73 serves as the catalytic Proton acceptor. NAD(+) is bound by residues Gly-137–Val-138, Asp-158, Arg-163, Pro-203–Met-206, Ala-213, Val-228, and Gly-251. Residue Gln-258 participates in shikimate binding. Gln-258 serves as a coordination point for L-quinate.

Belongs to the shikimate dehydrogenase family. Homodimer.

The enzyme catalyses L-quinate + NAD(+) = 3-dehydroquinate + NADH + H(+). It catalyses the reaction shikimate + NAD(+) = 3-dehydroshikimate + NADH + H(+). Its pathway is metabolic intermediate biosynthesis; chorismate biosynthesis; chorismate from D-erythrose 4-phosphate and phosphoenolpyruvate: step 4/7. It participates in aromatic compound metabolism; 3,4-dihydroxybenzoate biosynthesis; 3-dehydroquinate from D-quinate (NAD(+) route). Functionally, involved in the biosynthesis of the chorismate, which leads to the biosynthesis of aromatic amino acids, and plays a key role in the quinate degradation pathway. Catalyzes the NAD(+)-dependent oxidation of both quinate and shikimate to 3-dehydroquinate and 3-dehydroshikimate, respectively. The polypeptide is Quinate/shikimate dehydrogenase (NAD(+)) (Corynebacterium glutamicum (strain R)).